Here is a 232-residue protein sequence, read N- to C-terminus: tRNA (guanine-N(1)-)-methyltransferase (232 aa).

S-adenosyl-L-methionine-binding positions include glycine 111 and 131 to 136 (IGDYIL).

It belongs to the RNA methyltransferase TrmD family. In terms of assembly, homodimer.

Its subcellular location is the cytoplasm. The catalysed reaction is guanosine(37) in tRNA + S-adenosyl-L-methionine = N(1)-methylguanosine(37) in tRNA + S-adenosyl-L-homocysteine + H(+). Specifically methylates guanosine-37 in various tRNAs. This Bartonella bacilliformis (strain ATCC 35685 / KC583 / Herrer 020/F12,63) protein is tRNA (guanine-N(1)-)-methyltransferase.